The sequence spans 340 residues: Sodium/bile acid cotransporter 7 (340 aa).

The Cytoplasmic portion of the chain corresponds to 1 to 10 (MRLLERVRKE). The helical transmembrane segment at 11–31 (WFMVGIVVAIGAAKLEPSVGV) threads the bilayer. Over 32–37 (NGGPLK) the chain is Extracellular. A helical transmembrane segment spans residues 38–58 (PEITVSYIAVATIFFNSGLSL). At 59 to 71 (KTEELTSALVHLK) the chain is on the cytoplasmic side. A helical transmembrane segment spans residues 72-92 (LHLFIQVFTLAFFPTTIWLFL). The Extracellular portion of the chain corresponds to 93–116 (QLLSVTSINEWLLKGLQTVGCMPP). The helical transmembrane segment at 117-137 (PVSSAVILTKAVGGNEAAAIF) threads the bilayer. Residue Asn138 is a topological domain, cytoplasmic. Residues 139–159 (SAFGSFLGIVVTPVLLLLFLG) traverse the membrane as a helical segment. Topologically, residues 160 to 163 (SSSS) are extracellular. The chain crosses the membrane as a helical span at residues 164-184 (VPFTSIFSQLFMTVVVPLVIG). The Cytoplasmic portion of the chain corresponds to 185–201 (QIVRRYIKDWLERKKPP). Residues 202 to 222 (FGVVSSSVLLMIIYTTFCDTF) form a helical membrane-spanning segment. Residues 223-234 (SNPNIDLDKFSL) are Extracellular-facing. Residues 235–255 (ILILFIIVSIQLSFMLLTFVF) traverse the membrane as a helical segment. Over 256-270 (STRNNSGFTPADTVA) the chain is Cytoplasmic. The helical transmembrane segment at 271–291 (IIFCSTHKSLTLGIPMLKIVF) threads the bilayer. Over 292–298 (AGHEHLS) the chain is Extracellular. The helical transmembrane segment at 299-319 (LISLPLLIYHPAQILLGSVLV) threads the bilayer. At 320–340 (PTIKSWMVSRQKGVKLTRPTV) the chain is on the cytoplasmic side.

It belongs to the bile acid:sodium symporter (BASS) (TC 2.A.28) family. As to expression, strongly expressed in liver, adrenal gland, small intestine and colon. Moderately expressed in heart, lung, kidney and spleen. Weakly expressed in brain.

It localises to the cell membrane. The protein localises to the endoplasmic reticulum membrane. It is found in the golgi apparatus membrane. Functionally, involved in teeth and skeletal development. Has an essential role in the biosynthesis and trafficking of glycosaminoglycans and glycoproteins to produce a proper functioning extracellular matrix. Required for extracellular matrix mineralization. Also involved in the regulation of cellular calcium homeostasis. Does not show transport activity towards bile acids or steroid sulfates (including taurocholate, cholate, chenodeoxycholate, estrone-3-sulfate, dehydroepiandrosterone sulfate (DHEAS) and pregnenolone sulfate). In Rattus norvegicus (Rat), this protein is Sodium/bile acid cotransporter 7 (Slc10a7).